Reading from the N-terminus, the 158-residue chain is 2-C-methyl-D-erythritol 2,4-cyclodiphosphate synthase (158 aa).

Residues aspartate 9 and histidine 11 each coordinate a divalent metal cation. Residues 9–11 (DVH) and 35–36 (HS) contribute to the 4-CDP-2-C-methyl-D-erythritol 2-phosphate site. Histidine 43 serves as a coordination point for a divalent metal cation. Residues 57 to 59 (DIG), 62 to 66 (FPDTD), 101 to 107 (AQKPKMA), 133 to 136 (TTTE), phenylalanine 140, and arginine 143 each bind 4-CDP-2-C-methyl-D-erythritol 2-phosphate.

It belongs to the IspF family. In terms of assembly, homotrimer. The cofactor is a divalent metal cation.

The enzyme catalyses 4-CDP-2-C-methyl-D-erythritol 2-phosphate = 2-C-methyl-D-erythritol 2,4-cyclic diphosphate + CMP. It functions in the pathway isoprenoid biosynthesis; isopentenyl diphosphate biosynthesis via DXP pathway; isopentenyl diphosphate from 1-deoxy-D-xylulose 5-phosphate: step 4/6. Involved in the biosynthesis of isopentenyl diphosphate (IPP) and dimethylallyl diphosphate (DMAPP), two major building blocks of isoprenoid compounds. Catalyzes the conversion of 4-diphosphocytidyl-2-C-methyl-D-erythritol 2-phosphate (CDP-ME2P) to 2-C-methyl-D-erythritol 2,4-cyclodiphosphate (ME-CPP) with a corresponding release of cytidine 5-monophosphate (CMP). This chain is 2-C-methyl-D-erythritol 2,4-cyclodiphosphate synthase, found in Bacillus licheniformis (strain ATCC 14580 / DSM 13 / JCM 2505 / CCUG 7422 / NBRC 12200 / NCIMB 9375 / NCTC 10341 / NRRL NRS-1264 / Gibson 46).